Here is an 883-residue protein sequence, read N- to C-terminus: Translation initiation factor IF-2 (883 aa).

2 disordered regions span residues 53-90 (RSHG…GRSK) and 171-294 (EEAA…FERP). Residues 81–90 (EVTVNSGRSK) show a composition bias toward polar residues. The span at 172 to 185 (EAAAAAKAAEALAA) shows a compositional bias: low complexity. A compositionally biased stretch (basic and acidic residues) spans 221–238 (RSDDRNNRSAPRNERGPG). Residues 256–265 (GNSNNSNNRG) show a composition bias toward low complexity. The 170-residue stretch at 382-551 (QRPPVVTIMG…SVQAELLELK (170 aa)) folds into the tr-type G domain. The segment at 391-398 (GHVDHGKT) is G1. GTP is bound at residue 391-398 (GHVDHGKT). Residues 416 to 420 (GITQH) are G2. The G3 stretch occupies residues 437–440 (DTPG). GTP contacts are provided by residues 437-441 (DTPGH) and 491-494 (NKID). A G4 region spans residues 491-494 (NKID). The tract at residues 527–529 (SAK) is G5.

It belongs to the TRAFAC class translation factor GTPase superfamily. Classic translation factor GTPase family. IF-2 subfamily.

It localises to the cytoplasm. In terms of biological role, one of the essential components for the initiation of protein synthesis. Protects formylmethionyl-tRNA from spontaneous hydrolysis and promotes its binding to the 30S ribosomal subunits. Also involved in the hydrolysis of GTP during the formation of the 70S ribosomal complex. The polypeptide is Translation initiation factor IF-2 (Stenotrophomonas maltophilia (strain R551-3)).